A 191-amino-acid chain; its full sequence is Molybdenum cofactor guanylyltransferase (191 aa).

GTP contacts are provided by residues 13 to 15 (LAG), K26, D72, and D102. D102 serves as a coordination point for Mg(2+).

Belongs to the MobA family. In terms of assembly, monomer. Mg(2+) is required as a cofactor.

Its subcellular location is the cytoplasm. The catalysed reaction is Mo-molybdopterin + GTP + H(+) = Mo-molybdopterin guanine dinucleotide + diphosphate. Transfers a GMP moiety from GTP to Mo-molybdopterin (Mo-MPT) cofactor (Moco or molybdenum cofactor) to form Mo-molybdopterin guanine dinucleotide (Mo-MGD) cofactor. This Pseudomonas putida (strain ATCC 47054 / DSM 6125 / CFBP 8728 / NCIMB 11950 / KT2440) protein is Molybdenum cofactor guanylyltransferase.